The sequence spans 249 residues: Flavodoxin/ferredoxin--NADP reductase (249 aa).

Residues N2–N102 enclose the FAD-binding FR-type domain. FAD-binding positions include R51 to S54, Y67, Q75 to T77, and T117. NADP(+) contacts are provided by residues V144–R145, S174–R175, R185, and N215–D217. Residue Y248–W249 coordinates FAD.

The protein belongs to the ferredoxin--NADP reductase type 1 family. It depends on FAD as a cofactor.

It is found in the cytoplasm. The enzyme catalyses 2 reduced [2Fe-2S]-[ferredoxin] + NADP(+) + H(+) = 2 oxidized [2Fe-2S]-[ferredoxin] + NADPH. The catalysed reaction is reduced [flavodoxin] + NADP(+) = oxidized [flavodoxin] + NADPH + 2 H(+). In terms of biological role, transports electrons between flavodoxin or ferredoxin and NADPH. The chain is Flavodoxin/ferredoxin--NADP reductase (fpr) from Buchnera aphidicola subsp. Baizongia pistaciae (strain Bp).